Reading from the N-terminus, the 247-residue chain is Putative 2-succinyl-6-hydroxy-2,4-cyclohexadiene-1-carboxylate synthase (247 aa).

The 226-residue stretch at 4–229 folds into the AB hydrolase-1 domain; sequence IIFLHGLLGT…CAGHNSHLEN (226 aa).

The protein belongs to the AB hydrolase superfamily. MenH family. In terms of assembly, monomer.

The enzyme catalyses 5-enolpyruvoyl-6-hydroxy-2-succinyl-cyclohex-3-ene-1-carboxylate = (1R,6R)-6-hydroxy-2-succinyl-cyclohexa-2,4-diene-1-carboxylate + pyruvate. It functions in the pathway quinol/quinone metabolism; 1,4-dihydroxy-2-naphthoate biosynthesis; 1,4-dihydroxy-2-naphthoate from chorismate: step 3/7. The protein operates within quinol/quinone metabolism; menaquinone biosynthesis. Functionally, catalyzes a proton abstraction reaction that results in 2,5-elimination of pyruvate from 2-succinyl-5-enolpyruvyl-6-hydroxy-3-cyclohexene-1-carboxylate (SEPHCHC) and the formation of 2-succinyl-6-hydroxy-2,4-cyclohexadiene-1-carboxylate (SHCHC). This is Putative 2-succinyl-6-hydroxy-2,4-cyclohexadiene-1-carboxylate synthase from Haemophilus influenzae (strain ATCC 51907 / DSM 11121 / KW20 / Rd).